The chain runs to 144 residues: Large ribosomal subunit protein uL14 (144 aa).

Belongs to the universal ribosomal protein uL14 family. In terms of assembly, part of the 50S ribosomal subunit. Forms a cluster with proteins L3 and L24e, part of which may contact the 16S rRNA in 2 intersubunit bridges.

Binds to 23S rRNA. Forms part of two intersubunit bridges in the 70S ribosome. The polypeptide is Large ribosomal subunit protein uL14 (Pyrobaculum arsenaticum (strain DSM 13514 / JCM 11321 / PZ6)).